Consider the following 426-residue polypeptide: Serine hydroxymethyltransferase (426 aa).

(6S)-5,6,7,8-tetrahydrofolate-binding positions include Leu113 and 117-119 (GHL). Lys222 is subject to N6-(pyridoxal phosphate)lysine. 363–365 (SPF) provides a ligand contact to (6S)-5,6,7,8-tetrahydrofolate.

Belongs to the SHMT family. In terms of assembly, homodimer. Pyridoxal 5'-phosphate serves as cofactor.

Its subcellular location is the cytoplasm. It catalyses the reaction (6R)-5,10-methylene-5,6,7,8-tetrahydrofolate + glycine + H2O = (6S)-5,6,7,8-tetrahydrofolate + L-serine. It participates in one-carbon metabolism; tetrahydrofolate interconversion. It functions in the pathway amino-acid biosynthesis; glycine biosynthesis; glycine from L-serine: step 1/1. Its function is as follows. Catalyzes the reversible interconversion of serine and glycine with tetrahydrofolate (THF) serving as the one-carbon carrier. This reaction serves as the major source of one-carbon groups required for the biosynthesis of purines, thymidylate, methionine, and other important biomolecules. Also exhibits THF-independent aldolase activity toward beta-hydroxyamino acids, producing glycine and aldehydes, via a retro-aldol mechanism. This Azobacteroides pseudotrichonymphae genomovar. CFP2 protein is Serine hydroxymethyltransferase.